Consider the following 201-residue polypeptide: 5'(3')-deoxyribonucleotidase, cytosolic type (201 aa).

The Nucleophile role is filled by aspartate 10. Positions 10 and 12 each coordinate Mg(2+). Aspartate 12 (proton donor) is an active-site residue. 5 residues coordinate substrate: phenylalanine 18, phenylalanine 44, tyrosine 65, threonine 99, and lysine 134. Residue aspartate 145 participates in Mg(2+) binding. Serine 182 carries the post-translational modification Phosphoserine.

This sequence belongs to the 5'(3')-deoxyribonucleotidase family. As to quaternary structure, homodimer. Mg(2+) is required as a cofactor. Detected in skeletal muscle, heart and pancreas.

It is found in the cytoplasm. In terms of biological role, dephosphorylates the 5' and 2'(3')-phosphates of deoxyribonucleotides, with a preference for dUMP and dTMP, intermediate activity towards dGMP, and low activity towards dCMP and dAMP. The protein is 5'(3')-deoxyribonucleotidase, cytosolic type (NT5C) of Homo sapiens (Human).